The following is a 431-amino-acid chain: Enolase (431 aa).

The disordered stretch occupies residues leucine 27–glutamate 47. Glutamine 163 lines the (2R)-2-phosphoglycerate pocket. Glutamate 205 acts as the Proton donor in catalysis. Positions 242, 285, and 312 each coordinate Mg(2+). (2R)-2-phosphoglycerate-binding residues include lysine 337, arginine 366, serine 367, and lysine 388. Lysine 337 functions as the Proton acceptor in the catalytic mechanism.

Belongs to the enolase family. The cofactor is Mg(2+).

The protein resides in the cytoplasm. The protein localises to the secreted. Its subcellular location is the cell surface. The enzyme catalyses (2R)-2-phosphoglycerate = phosphoenolpyruvate + H2O. It functions in the pathway carbohydrate degradation; glycolysis; pyruvate from D-glyceraldehyde 3-phosphate: step 4/5. Its function is as follows. Catalyzes the reversible conversion of 2-phosphoglycerate (2-PG) into phosphoenolpyruvate (PEP). It is essential for the degradation of carbohydrates via glycolysis. This is Enolase from Oleidesulfovibrio alaskensis (strain ATCC BAA-1058 / DSM 17464 / G20) (Desulfovibrio alaskensis).